We begin with the raw amino-acid sequence, 238 residues long: Uracil-DNA glycosylase (238 aa).

Aspartate 81 functions as the Proton acceptor in the catalytic mechanism.

The protein belongs to the uracil-DNA glycosylase (UDG) superfamily. UNG family.

Its subcellular location is the cytoplasm. It carries out the reaction Hydrolyzes single-stranded DNA or mismatched double-stranded DNA and polynucleotides, releasing free uracil.. In terms of biological role, excises uracil residues from the DNA which can arise as a result of misincorporation of dUMP residues by DNA polymerase or due to deamination of cytosine. This is Uracil-DNA glycosylase from Corynebacterium efficiens (strain DSM 44549 / YS-314 / AJ 12310 / JCM 11189 / NBRC 100395).